The following is a 530-amino-acid chain: Autoinducer-2 kinase (530 aa).

This sequence belongs to the FGGY kinase family.

The protein resides in the cytoplasm. It catalyses the reaction (S)-4,5-dihydroxypentane-2,3-dione + ATP = (2S)-2-hydroxy-3,4-dioxopentyl phosphate + ADP + H(+). Catalyzes the phosphorylation of autoinducer-2 (AI-2) to phospho-AI-2, which subsequently inactivates the transcriptional regulator LsrR and leads to the transcription of the lsr operon. Phosphorylates the ring-open form of (S)-4,5-dihydroxypentane-2,3-dione (DPD), which is the precursor to all AI-2 signaling molecules, at the C5 position. The protein is Autoinducer-2 kinase of Yersinia pestis bv. Antiqua (strain Angola).